The sequence spans 60 residues: Large ribosomal subunit protein bL32 (60 aa).

It belongs to the bacterial ribosomal protein bL32 family.

This Oenococcus oeni (strain ATCC BAA-331 / PSU-1) protein is Large ribosomal subunit protein bL32.